The sequence spans 725 residues: MGRKVTVATCALNQWALDFEGNFQRILKSIQIAKGKGARYRLGPELEICGYGCWDHYHESDTLLHSLQVLAALLDAPATQDIICDVGMPIMHRNVRYNCLVIFLNRKILLIRPKMALANEGNYRELRWFTPWARSRQTEEYVLPRMLQDLTKQETVPFGDVVLATQDTCIGSEICEELWTPCSPHVNMGLDGVEIITNASGSHHVLRKAHTRVDLVTMATSKNGGIYLLANQKGCDGHLLYYDGCAMIAMNGSIFAQGTQFSLDDVEVLTATLDLEDVRSYRAKISSRNLEATRVNPYPRVTVDFALSVSEDLLEPVSEPVEWTYHRPEEEISLGPACWLWDFLRRNNQAGFFLPLSGGVDSAASACVVYSMCCLVCEAVKSGNQQVLTDVQNLVDESSYTPQDPRELCGRLLTTCYMASENSSQETHNRATELAQQIGSYHISLNIDPAVKAILGIFSLVTGKFPRFSAHGGSSRENLALQNVQARIRMVLAYLFAQLSLWSRGARGSLLVLGSANVDESLLGYLTKYDCSSADINPIGGISKTDLRAFVQLCAERFQLPVLQAILSAPATAELEPLADGQVSQMDEEDMGMTYTELSIFGRLRKVAKAGPYSMFCKLLNMWKDSCTPRQVAEKVKRFFSKYSINRHKMTTLTPAYHAENYSPDDNRFDLRPFLYNTRWPWQFLCIDNQVVQLERKTSQTLEEQIQEHFKEPSPIWKQLLPKDP.

The CN hydrolase domain maps to 5–275 (VTVATCALNQ…VEVLTATLDL (271 aa)). Glu45 acts as the Proton acceptor; for glutaminase activity in catalysis. The active-site For glutaminase activity is the Lys114. The active-site Nucleophile; for glutaminase activity is Cys175. The interval 325–706 (YHRPEEEISL…KTSQTLEEQI (382 aa)) is ligase. 355-362 (PLSGGVDS) contributes to the ATP binding site. Ser357 is an active-site residue.

This sequence in the C-terminal section; belongs to the NAD synthetase family. In terms of assembly, homohexamer.

It catalyses the reaction deamido-NAD(+) + L-glutamine + ATP + H2O = L-glutamate + AMP + diphosphate + NAD(+) + H(+). It participates in cofactor biosynthesis; NAD(+) biosynthesis; NAD(+) from deamido-NAD(+) (L-Gln route): step 1/1. Functionally, catalyzes the final step of the nicotinamide adenine dinucleotide (NAD) de novo synthesis pathway, the ATP-dependent amidation of deamido-NAD using L-glutamine as a nitrogen source. This Rattus norvegicus (Rat) protein is Glutamine-dependent NAD(+) synthetase (Nadsyn1).